A 183-amino-acid chain; its full sequence is Putative 3-methyladenine DNA glycosylase (183 aa).

Belongs to the DNA glycosylase MPG family.

The polypeptide is Putative 3-methyladenine DNA glycosylase (Legionella pneumophila (strain Corby)).